We begin with the raw amino-acid sequence, 347 residues long: Ribosomal RNA large subunit methyltransferase M (347 aa).

S-adenosyl-L-methionine is bound by residues Ser-184, 217–220 (APGG), Asp-236, Asp-256, and Asp-272. Lys-301 serves as the catalytic Proton acceptor.

Belongs to the class I-like SAM-binding methyltransferase superfamily. RNA methyltransferase RlmE family. RlmM subfamily. As to quaternary structure, monomer.

The protein resides in the cytoplasm. The catalysed reaction is cytidine(2498) in 23S rRNA + S-adenosyl-L-methionine = 2'-O-methylcytidine(2498) in 23S rRNA + S-adenosyl-L-homocysteine + H(+). Functionally, catalyzes the 2'-O-methylation at nucleotide C2498 in 23S rRNA. The sequence is that of Ribosomal RNA large subunit methyltransferase M from Xanthomonas campestris pv. campestris (strain 8004).